Consider the following 538-residue polypeptide: CTP synthase (538 aa).

The tract at residues 1–269 (MSPRKYVIVT…ARLVERRLFG (269 aa)) is amidoligase domain. Serine 15 lines the CTP pocket. Serine 15 contacts UTP. 16-21 (SVGKGL) lines the ATP pocket. Position 56 (tyrosine 56) interacts with L-glutamine. Position 73 (aspartate 73) interacts with ATP. Residues aspartate 73 and glutamate 143 each contribute to the Mg(2+) site. CTP is bound by residues 150 to 152 (DIE), 190 to 195 (KTKPVQ), and lysine 226. UTP-binding positions include 190-195 (KTKPVQ) and lysine 226. Residues 294 to 538 (KVAMVGKYTK…FVTAVARLRG (245 aa)) form the Glutamine amidotransferase type-1 domain. Residue glycine 358 participates in L-glutamine binding. Cysteine 385 acts as the Nucleophile; for glutamine hydrolysis in catalysis. L-glutamine is bound by residues 386–389 (FGMQ), glutamate 409, and arginine 466. Catalysis depends on residues histidine 512 and glutamate 514.

Belongs to the CTP synthase family. As to quaternary structure, homotetramer.

The catalysed reaction is UTP + L-glutamine + ATP + H2O = CTP + L-glutamate + ADP + phosphate + 2 H(+). It catalyses the reaction L-glutamine + H2O = L-glutamate + NH4(+). The enzyme catalyses UTP + NH4(+) + ATP = CTP + ADP + phosphate + 2 H(+). It participates in pyrimidine metabolism; CTP biosynthesis via de novo pathway; CTP from UDP: step 2/2. Allosterically activated by GTP, when glutamine is the substrate; GTP has no effect on the reaction when ammonia is the substrate. The allosteric effector GTP functions by stabilizing the protein conformation that binds the tetrahedral intermediate(s) formed during glutamine hydrolysis. Inhibited by the product CTP, via allosteric rather than competitive inhibition. Its function is as follows. Catalyzes the ATP-dependent amination of UTP to CTP with either L-glutamine or ammonia as the source of nitrogen. Regulates intracellular CTP levels through interactions with the four ribonucleotide triphosphates. This chain is CTP synthase, found in Aeropyrum pernix (strain ATCC 700893 / DSM 11879 / JCM 9820 / NBRC 100138 / K1).